The chain runs to 760 residues: Striatin-4 (760 aa).

The interval 1–65 (MMEERAAAAV…PTAGPEPLSL (65 aa)) is disordered. Residues 7-35 (AAAVASAASSCRPLGSGTAPNPTAAAPAS) are compositionally biased toward low complexity. Residues 43–54 (PVGKGGGGGGSP) show a composition bias toward gly residues. Residue serine 53 is modified to Phosphoserine. A coiled-coil region spans residues 69-136 (LHFIQHEWAR…QERAKYHKLK (68 aa)). Residues 71 to 79 (FIQHEWARF) are caveolin-binding. The calmodulin-binding stretch occupies residues 165–182 (ENSPLVWKEGRQLLRQYL). A phosphoserine mark is found at serine 206, serine 223, and serine 276. Disordered regions lie at residues 210-233 (NGAG…SGGE) and 272-346 (EDED…PHEL). Composition is skewed to acidic residues over residues 272–283 (EDEDSDEDDELD) and 302–317 (EMED…DAIN). Residues 332 to 346 (PDPRRCTSEGNPHEL) show a composition bias toward basic and acidic residues. 7 WD repeats span residues 443–482 (SHYD…TAKK), 496–535 (AHRG…MDPY), 549–588 (GHGD…PSCL), 595–635 (GEHG…ALLT), 642–681 (SGPA…SVHS), 684–723 (AHLD…CVQE), and 730–759 (KHEE…AKVF).

The protein belongs to the WD repeat striatin family. In terms of assembly, part of the core of STRIPAK complexes composed of PP2A catalytic and scaffolding subunits, the striatins (PP2A regulatory subunits), the striatin-associated proteins MOB4, STRIP1 and STRIP2, PDCD10 and members of the STE20 kinases, such as STK24 and STK26. Interacts with CTTNBP2NL. In terms of tissue distribution, mainly expressed in brain but is also expressed at low levels in the kidney.

The protein localises to the cytoplasm. It is found in the membrane. It localises to the cell projection. The protein resides in the dendritic spine. Its function is as follows. Calmodulin-binding scaffolding protein which is the center of the striatin-interacting phosphatase and kinase (STRIPAK) complexes. STRIPAK complexes have critical roles in protein (de)phosphorylation and are regulators of multiple signaling pathways including Hippo, MAPK, nuclear receptor and cytoskeleton remodeling. Different types of STRIPAK complexes are involved in a variety of biological processes such as cell growth, differentiation, apoptosis, metabolism and immune regulation. Key regulator of the expanded Hippo signaling pathway by interacting and allowing the inhibition of MAP4K kinases by the STRIPAK complex. This Mus musculus (Mouse) protein is Striatin-4 (Strn4).